Consider the following 226-residue polypeptide: Lipoprotein-releasing system ATP-binding protein LolD (226 aa).

The ABC transporter domain maps to 6 to 226 (LSVEQVSKSF…QLQQGSLIRI (221 aa)). An ATP-binding site is contributed by 42 to 49 (GESGCGKS).

Belongs to the ABC transporter superfamily. Lipoprotein translocase (TC 3.A.1.125) family. In terms of assembly, the complex is composed of two ATP-binding proteins (LolD) and two transmembrane proteins (LolC and LolE).

It is found in the cell inner membrane. Part of the ABC transporter complex LolCDE involved in the translocation of mature outer membrane-directed lipoproteins, from the inner membrane to the periplasmic chaperone, LolA. Responsible for the formation of the LolA-lipoprotein complex in an ATP-dependent manner. The protein is Lipoprotein-releasing system ATP-binding protein LolD of Treponema pallidum (strain Nichols).